We begin with the raw amino-acid sequence, 587 residues long: 2-succinyl-5-enolpyruvyl-6-hydroxy-3-cyclohexene-1-carboxylate synthase (587 aa).

The protein belongs to the TPP enzyme family. MenD subfamily. In terms of assembly, homodimer. Mg(2+) is required as a cofactor. Requires Mn(2+) as cofactor. The cofactor is thiamine diphosphate.

The catalysed reaction is isochorismate + 2-oxoglutarate + H(+) = 5-enolpyruvoyl-6-hydroxy-2-succinyl-cyclohex-3-ene-1-carboxylate + CO2. The protein operates within quinol/quinone metabolism; 1,4-dihydroxy-2-naphthoate biosynthesis; 1,4-dihydroxy-2-naphthoate from chorismate: step 2/7. It participates in cofactor biosynthesis; phylloquinone biosynthesis. In terms of biological role, catalyzes the thiamine diphosphate-dependent decarboxylation of 2-oxoglutarate and the subsequent addition of the resulting succinic semialdehyde-thiamine pyrophosphate anion to isochorismate to yield 2-succinyl-5-enolpyruvyl-6-hydroxy-3-cyclohexene-1-carboxylate (SEPHCHC). The chain is 2-succinyl-5-enolpyruvyl-6-hydroxy-3-cyclohexene-1-carboxylate synthase from Prochlorococcus marinus (strain MIT 9301).